We begin with the raw amino-acid sequence, 227 residues long: Cytochrome c oxidase subunit 2 (227 aa).

Residues 1 to 14 (MAHPAQLGFQDAAS) are Mitochondrial intermembrane-facing. A helical transmembrane segment spans residues 15–45 (PIMEELMYFHDHTLMIVFLISSLVLYIISLM). At 46 to 59 (LTTELTHTSTMDAQ) the chain is on the mitochondrial matrix side. The helical transmembrane segment at 60–87 (EVETVWTILPAVILILIALPSLRILYMM) threads the bilayer. Over 88–227 (DEITTPSLTL…HFEEWLLSTL (140 aa)) the chain is Mitochondrial intermembrane. Positions 161, 196, 198, 200, 204, and 207 each coordinate Cu cation. Mg(2+) is bound at residue Glu198.

The protein belongs to the cytochrome c oxidase subunit 2 family. As to quaternary structure, component of the cytochrome c oxidase (complex IV, CIV), a multisubunit enzyme composed of 14 subunits. The complex is composed of a catalytic core of 3 subunits MT-CO1, MT-CO2 and MT-CO3, encoded in the mitochondrial DNA, and 11 supernumerary subunits COX4I, COX5A, COX5B, COX6A, COX6B, COX6C, COX7A, COX7B, COX7C, COX8 and NDUFA4, which are encoded in the nuclear genome. The complex exists as a monomer or a dimer and forms supercomplexes (SCs) in the inner mitochondrial membrane with NADH-ubiquinone oxidoreductase (complex I, CI) and ubiquinol-cytochrome c oxidoreductase (cytochrome b-c1 complex, complex III, CIII), resulting in different assemblies (supercomplex SCI(1)III(2)IV(1) and megacomplex MCI(2)III(2)IV(2)). Found in a complex with TMEM177, COA6, COX18, COX20, SCO1 and SCO2. Interacts with TMEM177 in a COX20-dependent manner. Interacts with COX20. Interacts with COX16. Cu cation is required as a cofactor.

It is found in the mitochondrion inner membrane. The enzyme catalyses 4 Fe(II)-[cytochrome c] + O2 + 8 H(+)(in) = 4 Fe(III)-[cytochrome c] + 2 H2O + 4 H(+)(out). Its function is as follows. Component of the cytochrome c oxidase, the last enzyme in the mitochondrial electron transport chain which drives oxidative phosphorylation. The respiratory chain contains 3 multisubunit complexes succinate dehydrogenase (complex II, CII), ubiquinol-cytochrome c oxidoreductase (cytochrome b-c1 complex, complex III, CIII) and cytochrome c oxidase (complex IV, CIV), that cooperate to transfer electrons derived from NADH and succinate to molecular oxygen, creating an electrochemical gradient over the inner membrane that drives transmembrane transport and the ATP synthase. Cytochrome c oxidase is the component of the respiratory chain that catalyzes the reduction of oxygen to water. Electrons originating from reduced cytochrome c in the intermembrane space (IMS) are transferred via the dinuclear copper A center (CU(A)) of subunit 2 and heme A of subunit 1 to the active site in subunit 1, a binuclear center (BNC) formed by heme A3 and copper B (CU(B)). The BNC reduces molecular oxygen to 2 water molecules using 4 electrons from cytochrome c in the IMS and 4 protons from the mitochondrial matrix. This Microcebus tavaratra (Northern rufous mouse lemur) protein is Cytochrome c oxidase subunit 2 (MT-CO2).